A 426-amino-acid polypeptide reads, in one-letter code: 3-phosphoshikimate 1-carboxyvinyltransferase (426 aa).

Residues lysine 22, serine 23, and arginine 27 each coordinate 3-phosphoshikimate. Lysine 22 contacts phosphoenolpyruvate. The phosphoenolpyruvate site is built by glycine 96 and arginine 124. Residues serine 170, serine 171, glutamine 172, serine 198, aspartate 314, asparagine 337, and lysine 341 each contribute to the 3-phosphoshikimate site. Phosphoenolpyruvate is bound at residue glutamine 172. Aspartate 314 acts as the Proton acceptor in catalysis. Arginine 345, arginine 387, and lysine 412 together coordinate phosphoenolpyruvate.

It belongs to the EPSP synthase family. Monomer.

It localises to the cytoplasm. It catalyses the reaction 3-phosphoshikimate + phosphoenolpyruvate = 5-O-(1-carboxyvinyl)-3-phosphoshikimate + phosphate. It functions in the pathway metabolic intermediate biosynthesis; chorismate biosynthesis; chorismate from D-erythrose 4-phosphate and phosphoenolpyruvate: step 6/7. Catalyzes the transfer of the enolpyruvyl moiety of phosphoenolpyruvate (PEP) to the 5-hydroxyl of shikimate-3-phosphate (S3P) to produce enolpyruvyl shikimate-3-phosphate and inorganic phosphate. This chain is 3-phosphoshikimate 1-carboxyvinyltransferase, found in Vibrio cholerae serotype O1 (strain ATCC 39541 / Classical Ogawa 395 / O395).